The primary structure comprises 236 residues: Probable apoptosis inhibitor 2 (236 aa).

The stretch at 85 to 150 (RKRSFASFKW…AHAADCAFRR (66 aa)) is one BIR repeat. Cysteine 123, cysteine 126, histidine 142, and cysteine 146 together coordinate Zn(2+). The segment at 189–223 (CKVCFVNEKSVCFLPCRHLVVCAECSPRCKRCCVC) adopts an RING-type zinc-finger fold.

This is Probable apoptosis inhibitor 2 (IAP2) from Orgyia pseudotsugata multicapsid polyhedrosis virus (OpMNPV).